We begin with the raw amino-acid sequence, 585 residues long: Arginine--tRNA ligase (585 aa).

The 'HIGH' region motif lies at 127–137; it reads PNTNKPLHVGH.

This sequence belongs to the class-I aminoacyl-tRNA synthetase family. Monomer.

The protein localises to the cytoplasm. It carries out the reaction tRNA(Arg) + L-arginine + ATP = L-arginyl-tRNA(Arg) + AMP + diphosphate. This chain is Arginine--tRNA ligase, found in Borreliella afzelii (strain PKo) (Borrelia afzelii).